The following is a 372-amino-acid chain: Methylthioribose-1-phosphate isomerase (372 aa).

The active-site Proton donor is the D252.

The protein belongs to the eIF-2B alpha/beta/delta subunits family. MtnA subfamily.

It is found in the cytoplasm. Its subcellular location is the nucleus. The enzyme catalyses 5-(methylsulfanyl)-alpha-D-ribose 1-phosphate = 5-(methylsulfanyl)-D-ribulose 1-phosphate. It functions in the pathway amino-acid biosynthesis; L-methionine biosynthesis via salvage pathway; L-methionine from S-methyl-5-thio-alpha-D-ribose 1-phosphate: step 1/6. In terms of biological role, catalyzes the interconversion of methylthioribose-1-phosphate (MTR-1-P) into methylthioribulose-1-phosphate (MTRu-1-P). This is Methylthioribose-1-phosphate isomerase from Yarrowia lipolytica (strain CLIB 122 / E 150) (Yeast).